We begin with the raw amino-acid sequence, 184 residues long: uncharacterized protein (184 aa).

Residues 5–27 (YLLATAMFLIVCVYVISETVNLH) traverse the membrane as a helical segment.

It localises to the membrane. This is an uncharacterized protein from Methanocaldococcus jannaschii (strain ATCC 43067 / DSM 2661 / JAL-1 / JCM 10045 / NBRC 100440) (Methanococcus jannaschii).